The sequence spans 415 residues: Peptide chain release factor subunit 1 (415 aa).

Belongs to the eukaryotic release factor 1 family. As to quaternary structure, heterodimer of two subunits, one of which binds GTP.

It is found in the cytoplasm. Directs the termination of nascent peptide synthesis (translation) in response to the termination codons UAA, UAG and UGA. This is Peptide chain release factor subunit 1 from Thermococcus sibiricus (strain DSM 12597 / MM 739).